The following is a 637-amino-acid chain: 1-deoxy-D-xylulose-5-phosphate synthase (637 aa).

Residues histidine 76 and 117 to 119 (GHS) contribute to the thiamine diphosphate site. Aspartate 148 provides a ligand contact to Mg(2+). Thiamine diphosphate is bound by residues 149 to 150 (GA), asparagine 177, tyrosine 294, and glutamate 381. Asparagine 177 contributes to the Mg(2+) binding site.

It belongs to the transketolase family. DXPS subfamily. In terms of assembly, homodimer. Mg(2+) is required as a cofactor. Thiamine diphosphate serves as cofactor.

The catalysed reaction is D-glyceraldehyde 3-phosphate + pyruvate + H(+) = 1-deoxy-D-xylulose 5-phosphate + CO2. It participates in metabolic intermediate biosynthesis; 1-deoxy-D-xylulose 5-phosphate biosynthesis; 1-deoxy-D-xylulose 5-phosphate from D-glyceraldehyde 3-phosphate and pyruvate: step 1/1. Functionally, catalyzes the acyloin condensation reaction between C atoms 2 and 3 of pyruvate and glyceraldehyde 3-phosphate to yield 1-deoxy-D-xylulose-5-phosphate (DXP). In Neisseria gonorrhoeae (strain NCCP11945), this protein is 1-deoxy-D-xylulose-5-phosphate synthase.